The primary structure comprises 405 residues: 4-hydroxy-3-methylbut-2-enyl diphosphate reductase (405 aa).

Cys-66 lines the [4Fe-4S] cluster pocket. His-96 is a binding site for (2E)-4-hydroxy-3-methylbut-2-enyl diphosphate. His-96 is a binding site for dimethylallyl diphosphate. His-96 provides a ligand contact to isopentenyl diphosphate. Residue Cys-158 participates in [4Fe-4S] cluster binding. His-186 contacts (2E)-4-hydroxy-3-methylbut-2-enyl diphosphate. His-186 is a dimethylallyl diphosphate binding site. Isopentenyl diphosphate is bound at residue His-186. The Proton donor role is filled by Glu-188. Thr-251 lines the (2E)-4-hydroxy-3-methylbut-2-enyl diphosphate pocket. Cys-289 contributes to the [4Fe-4S] cluster binding site. (2E)-4-hydroxy-3-methylbut-2-enyl diphosphate contacts are provided by Ser-318, Ser-319, Asn-320, and Ser-380. Residues Ser-318, Ser-319, Asn-320, and Ser-380 each contribute to the dimethylallyl diphosphate site. Positions 318, 319, 320, and 380 each coordinate isopentenyl diphosphate.

The protein belongs to the IspH family. Requires [4Fe-4S] cluster as cofactor.

It catalyses the reaction isopentenyl diphosphate + 2 oxidized [2Fe-2S]-[ferredoxin] + H2O = (2E)-4-hydroxy-3-methylbut-2-enyl diphosphate + 2 reduced [2Fe-2S]-[ferredoxin] + 2 H(+). It carries out the reaction dimethylallyl diphosphate + 2 oxidized [2Fe-2S]-[ferredoxin] + H2O = (2E)-4-hydroxy-3-methylbut-2-enyl diphosphate + 2 reduced [2Fe-2S]-[ferredoxin] + 2 H(+). Its pathway is isoprenoid biosynthesis; dimethylallyl diphosphate biosynthesis; dimethylallyl diphosphate from (2E)-4-hydroxy-3-methylbutenyl diphosphate: step 1/1. The protein operates within isoprenoid biosynthesis; isopentenyl diphosphate biosynthesis via DXP pathway; isopentenyl diphosphate from 1-deoxy-D-xylulose 5-phosphate: step 6/6. Catalyzes the conversion of 1-hydroxy-2-methyl-2-(E)-butenyl 4-diphosphate (HMBPP) into a mixture of isopentenyl diphosphate (IPP) and dimethylallyl diphosphate (DMAPP). Acts in the terminal step of the DOXP/MEP pathway for isoprenoid precursor biosynthesis. This is 4-hydroxy-3-methylbut-2-enyl diphosphate reductase from Cyanothece sp. (strain PCC 7425 / ATCC 29141).